Here is a 361-residue protein sequence, read N- to C-terminus: Phosphoribosylformylglycinamidine cyclo-ligase (361 aa).

This sequence belongs to the AIR synthase family.

It is found in the cytoplasm. The catalysed reaction is 2-formamido-N(1)-(5-O-phospho-beta-D-ribosyl)acetamidine + ATP = 5-amino-1-(5-phospho-beta-D-ribosyl)imidazole + ADP + phosphate + H(+). The protein operates within purine metabolism; IMP biosynthesis via de novo pathway; 5-amino-1-(5-phospho-D-ribosyl)imidazole from N(2)-formyl-N(1)-(5-phospho-D-ribosyl)glycinamide: step 2/2. The protein is Phosphoribosylformylglycinamidine cyclo-ligase of Bartonella quintana (strain Toulouse) (Rochalimaea quintana).